Here is a 414-residue protein sequence, read N- to C-terminus: Enterobactin exporter EntS (414 aa).

Over 1-21 the chain is Cytoplasmic; sequence MNRQSWLLNLSLLKTHPAFRA. A helical membrane pass occupies residues 22 to 42; sequence VFLARFISIVSLGLLGVAVPV. At 43 to 55 the chain is on the periplasmic side; the sequence is QIQMMTHSTWQVG. A helical transmembrane segment spans residues 56–76; that stretch reads LSVTLTGGAMFIGLMVGGVLA. Over 77–83 the chain is Cytoplasmic; that stretch reads DRYERKK. The helical transmembrane segment at 84-104 threads the bilayer; the sequence is VILLARGTCGIGFIGLCVNAL. At 105-109 the chain is on the periplasmic side; the sequence is LPEPS. The chain crosses the membrane as a helical span at residues 110–130; the sequence is LLAIYLLGLWDGFFASLGVTA. The Cytoplasmic portion of the chain corresponds to 131–156; the sequence is LLAATPALVGRENLMQAGAITMLTVR. The helical transmembrane segment at 157-177 threads the bilayer; it reads LGSVISPMLGGILLASGGVAW. Position 178 (Asn-178) is a topological domain, periplasmic. The chain crosses the membrane as a helical span at residues 179 to 199; the sequence is YGLAAAGTFITLLPLLTLPRL. Residues 200–218 are Cytoplasmic-facing; that stretch reads PVPPQPRENPFIALLAAFR. A helical transmembrane segment spans residues 219-239; sequence FLLASPLIGGIALLGGLVTMA. Over 240–256 the chain is Periplasmic; sequence SAVRVLYPALAMSWQMS. A helical transmembrane segment spans residues 257-277; it reads AAQIGLLYAAIPLGAAIGALT. Residues 278 to 287 are Cytoplasmic-facing; that stretch reads SGQLAHSVRP. Residues 288 to 307 form a helical membrane-spanning segment; sequence GLIMLVSTVGSFLAVGLFAI. Topologically, residues 308–313 are periplasmic; the sequence is MPVWIA. The chain crosses the membrane as a helical span at residues 314-336; it reads GVICLALFGWLSAISSLLQYTLL. Residues 337-356 are Cytoplasmic-facing; sequence QTQTPENMLGRMNGLWTAQN. Residues 357–377 form a helical membrane-spanning segment; the sequence is VTGDAIGAALLGGLGAMMTPV. Position 378 (Ala-378) is a topological domain, periplasmic. Residues 379 to 399 traverse the membrane as a helical segment; sequence SASVSGFGLVIIGLLLLLVLG. Residues 400 to 414 lie on the Cytoplasmic side of the membrane; sequence ELRRFRQTPPVSDAG.

Belongs to the major facilitator superfamily. EntS (TC 2.A.1.38) family.

Its subcellular location is the cell inner membrane. In terms of biological role, component of an export pathway for enterobactin. In Salmonella typhimurium (strain LT2 / SGSC1412 / ATCC 700720), this protein is Enterobactin exporter EntS.